A 294-amino-acid chain; its full sequence is ATP synthase gamma chain (294 aa).

It belongs to the ATPase gamma chain family. In terms of assembly, F-type ATPases have 2 components, CF(1) - the catalytic core - and CF(0) - the membrane proton channel. CF(1) has five subunits: alpha(3), beta(3), gamma(1), delta(1), epsilon(1). CF(0) has three main subunits: a, b and c.

It localises to the cell inner membrane. Produces ATP from ADP in the presence of a proton gradient across the membrane. The gamma chain is believed to be important in regulating ATPase activity and the flow of protons through the CF(0) complex. The sequence is that of ATP synthase gamma chain from Caulobacter sp. (strain K31).